Reading from the N-terminus, the 270-residue chain is Imidazole glycerol phosphate synthase subunit HisF (270 aa).

Residues aspartate 11 and aspartate 130 contribute to the active site.

The protein belongs to the HisA/HisF family. As to quaternary structure, heterodimer of HisH and HisF.

It localises to the cytoplasm. It carries out the reaction 5-[(5-phospho-1-deoxy-D-ribulos-1-ylimino)methylamino]-1-(5-phospho-beta-D-ribosyl)imidazole-4-carboxamide + L-glutamine = D-erythro-1-(imidazol-4-yl)glycerol 3-phosphate + 5-amino-1-(5-phospho-beta-D-ribosyl)imidazole-4-carboxamide + L-glutamate + H(+). Its pathway is amino-acid biosynthesis; L-histidine biosynthesis; L-histidine from 5-phospho-alpha-D-ribose 1-diphosphate: step 5/9. In terms of biological role, IGPS catalyzes the conversion of PRFAR and glutamine to IGP, AICAR and glutamate. The HisF subunit catalyzes the cyclization activity that produces IGP and AICAR from PRFAR using the ammonia provided by the HisH subunit. The sequence is that of Imidazole glycerol phosphate synthase subunit HisF from Chloroflexus aggregans (strain MD-66 / DSM 9485).